We begin with the raw amino-acid sequence, 119 residues long: MLSNIIPLSIGAALGATARWLLNLAVPAAMSPATGNLFANWTGALLIGIFAETINHPQWKLLLITGFLGSLTTLSGFSLETVTLLQSNRPASALANIFLHTAGSLLLTWLGLKIGAAVK.

The next 4 helical transmembrane spans lie at isoleucine 5–alanine 25, threonine 34–isoleucine 54, tryptophan 59–leucine 79, and isoleucine 97–alanine 117. Residues glycine 69 and threonine 72 each coordinate Na(+).

It belongs to the fluoride channel Fluc/FEX (TC 1.A.43) family.

The protein resides in the cell inner membrane. It catalyses the reaction fluoride(in) = fluoride(out). Na(+) is not transported, but it plays an essential structural role and its presence is essential for fluoride channel function. Functionally, fluoride-specific ion channel. Important for reducing fluoride concentration in the cell, thus reducing its toxicity. The chain is Fluoride-specific ion channel FluC from Neisseria meningitidis serogroup C / serotype 2a (strain ATCC 700532 / DSM 15464 / FAM18).